Consider the following 202-residue polypeptide: MSRFAKVERKTKESDIVVELDLDGTGQVSIDTGVPFFDHMLTSLGTHASFDLTVKAVGDIEIEGHHTIEDTSIVLGQALAQALGDKKGIRRFGDAFIPMDECLAHAAVDVSGRPYFVHTGEPDYMVQFTIAGSAAPYHTVVNRHVFESLAYNARIALHVRTLYGRDPHHITEAEYKAVARALRQAVEYDPRVTGVPSTKGTL.

This sequence belongs to the imidazoleglycerol-phosphate dehydratase family.

It is found in the cytoplasm. It carries out the reaction D-erythro-1-(imidazol-4-yl)glycerol 3-phosphate = 3-(imidazol-4-yl)-2-oxopropyl phosphate + H2O. It participates in amino-acid biosynthesis; L-histidine biosynthesis; L-histidine from 5-phospho-alpha-D-ribose 1-diphosphate: step 6/9. The chain is Imidazoleglycerol-phosphate dehydratase from Mycolicibacterium gilvum (strain PYR-GCK) (Mycobacterium gilvum (strain PYR-GCK)).